We begin with the raw amino-acid sequence, 704 residues long: Elongation factor G 1 (704 aa).

Residues 8 to 291 (ERYRNIGISA…AVIDYLPSPA (284 aa)) enclose the tr-type G domain. GTP is bound by residues 17 to 24 (AHIDAGKT), 88 to 92 (DTPGH), and 142 to 145 (NKMD).

It belongs to the TRAFAC class translation factor GTPase superfamily. Classic translation factor GTPase family. EF-G/EF-2 subfamily.

It is found in the cytoplasm. In terms of biological role, catalyzes the GTP-dependent ribosomal translocation step during translation elongation. During this step, the ribosome changes from the pre-translocational (PRE) to the post-translocational (POST) state as the newly formed A-site-bound peptidyl-tRNA and P-site-bound deacylated tRNA move to the P and E sites, respectively. Catalyzes the coordinated movement of the two tRNA molecules, the mRNA and conformational changes in the ribosome. In Burkholderia pseudomallei (strain 1710b), this protein is Elongation factor G 1.